Here is a 383-residue protein sequence, read N- to C-terminus: Fatty acid hydroxylase ahd1 (383 aa).

The next 4 helical transmembrane spans lie at 84 to 104 (VMGLTTHFVTITMAIVFNKSW), 123 to 143 (TVHTWILLSTCQLLVIGLFAL), 172 to 192 (LIPVVLFNLVVVNTISNIIYY), and 214 to 236 (VAQWLVCLLMEDIGFYTVHRALH). The region spanning 217–341 (WLVCLLMEDI…VGLLDAIFKT (125 aa)) is the Fatty acid hydroxylase domain. An N-linked (GlcNAc...) asparagine glycan is attached at asparagine 342.

It belongs to the sterol desaturase family.

It is found in the membrane. It participates in secondary metabolite biosynthesis. Its function is as follows. Fatty acid hydroxylase; part of the gene cluster that mediates the biosynthesis of the glycolipid biosurfactant ustilagic acid (UA). UA is a secreted cellobiose glycolipid that is toxic for many microorganisms and confers biocontrol activity to U.maydis. UA consists of 15,16-dihydroxypalmitic or 2,15,16-trihydroxypalmitic acid, which is O-glycosidically linked to cellobiose at its terminal hydroxyl group. In addition, the cellobiose moiety is acetylated and acylated with a short-chain hydroxy fatty acid. UA biosynthesis starts with omega-hydroxylation of palmitic acid catalyzed by the cytochrome P450 monooxygenase cyp1. Terminal hydroxylation of palmitic acid precedes subterminal hydroxylation catalyzed by the cytochrome P450 monooxygenase cyp2. Sequential glucosylation of the hydroxy fatty acid is probably catalyzed by the glycosyltransferase ugt1. The cellobiose lipid is further decorated by acetylation of the proximal glucose residue and by acylation with a short-chain beta-hydroxy fatty acid at the distal glucose residue. The acyltransferase uat1 may be a good candidate for catalyzing either acetylation or acylation of the cellobiose lipid. The fatty acid synthase fas2 may be involved in synthesis of the carbon backbone of the short-chain beta-hydroxy fatty acid esterified to the cellobiose disaccharide. The secreted UA consists of a mixture of both alpha-hydroxylated and non-hydroxylated glycolipids; therefore, alpha-hydroxylation of the long-chain fatty, catalyzed by the fatty acid hydroxylase ahd1, occurs late in UA biosynthesis and may be the last step before secretion. The sequence is that of Fatty acid hydroxylase ahd1 from Mycosarcoma maydis (Corn smut fungus).